The sequence spans 75 residues: CDC42 small effector protein 2-B (75 aa).

Residues C10 and C11 are each lipidated (S-palmitoyl cysteine). Residues 29 to 42 enclose the CRIB domain; it reads IGEPMNFVHTAHVG.

This sequence belongs to the CDC42SE/SPEC family.

It is found in the cytoplasm. The protein resides in the cytoskeleton. It localises to the cell membrane. Functionally, probably involved in the organization of the actin cytoskeleton by acting downstream of CDC42, inducing actin filament assembly. This Xenopus laevis (African clawed frog) protein is CDC42 small effector protein 2-B (cdc42se2-b).